The chain runs to 867 residues: Retinoblastoma-related protein 1 (867 aa).

A domain A region spans residues 275–476 (TPVTSAMTTA…EKGSSLYNSL (202 aa)). The tract at residues 275–722 (TPVTSAMTTA…NEVFVPAAKP (448 aa)) is pocket; binds RPD3I and RBAP1. Positions 477–594 (IVARPSVASE…PVGGNEKCAD (118 aa)) are spacer. The disordered stretch occupies residues 512 to 563 (EGLPATPSKKRAAGPDDNADPRSPKRSCNESRNTVVERNLQTPPPKQSHMVS). The segment covering 530–540 (ADPRSPKRSCN) has biased composition (basic and acidic residues). The segment covering 541 to 552 (ESRNTVVERNLQ) has biased composition (polar residues). The interval 595 to 722 (VTIHIFFSKI…NEVFVPAAKP (128 aa)) is domain B. 2 disordered regions span residues 734 to 762 (PEDKKNASGQIPGSPKPSPFPNLPDMSPK) and 843 to 867 (QINGGSTSDPAAAFSPLSKKRETDT).

The protein belongs to the retinoblastoma protein (RB) family. Interacts with RPD3I, RBAP1, the Arabidopsis cyclin CYCD3-1, the mastrevirus replication-associated protein A (RepA) and the begomovirus replication-associated protein (Rep). Ubiquitous.

It is found in the nucleus. Functionally, regulator of biological processes that recruits a histone deacetylase to control gene transcription. May play a role in the entry into mitosis, negatively regulating the cell proliferation. Formation of stable complexes with geminiviridae replication-associated proteins may create a cellular environment which favors viral DNA replication. This is Retinoblastoma-related protein 1 (RBR1) from Zea mays (Maize).